Reading from the N-terminus, the 156-residue chain is Small ribosomal subunit protein uS7 (156 aa).

Belongs to the universal ribosomal protein uS7 family. As to quaternary structure, part of the 30S ribosomal subunit. Contacts proteins S9 and S11.

In terms of biological role, one of the primary rRNA binding proteins, it binds directly to 16S rRNA where it nucleates assembly of the head domain of the 30S subunit. Is located at the subunit interface close to the decoding center, probably blocks exit of the E-site tRNA. This chain is Small ribosomal subunit protein uS7, found in Prochlorococcus marinus (strain MIT 9211).